The chain runs to 1221 residues: DNA-directed RNA polymerase subunit beta' (1221 aa).

Positions 60, 62, 75, and 78 each coordinate Zn(2+). Mg(2+)-binding residues include D449, D451, and D453. C820, C894, C901, and C904 together coordinate Zn(2+).

This sequence belongs to the RNA polymerase beta' chain family. As to quaternary structure, the RNAP catalytic core consists of 2 alpha, 1 beta, 1 beta' and 1 omega subunit. When a sigma factor is associated with the core the holoenzyme is formed, which can initiate transcription. Mg(2+) is required as a cofactor. The cofactor is Zn(2+).

It carries out the reaction RNA(n) + a ribonucleoside 5'-triphosphate = RNA(n+1) + diphosphate. In terms of biological role, DNA-dependent RNA polymerase catalyzes the transcription of DNA into RNA using the four ribonucleoside triphosphates as substrates. The protein is DNA-directed RNA polymerase subunit beta' of Ligilactobacillus salivarius (strain UCC118) (Lactobacillus salivarius).